Consider the following 198-residue polypeptide: MASKKMEALGSVVAEALGDKLVRSTLALDELTIVCKASDLLSVAQTLRDHADLAFEQCIDVCGMDYSAYRDEPWDGPRFAAVYHLLSVKLNHRIRLRVFAEDDDFPVIPSVNGIWNAANWFEREAFDLYGIVFEGHPDLRRLLTDYGFVGHPFRKDFPLSGYVEMRYDPTQQRVIYQPVTIEPREITPRIIREENYGG.

Belongs to the complex I 30 kDa subunit family. In terms of assembly, NDH-1 is composed of 14 different subunits. Subunits NuoB, C, D, E, F, and G constitute the peripheral sector of the complex.

The protein localises to the cell inner membrane. It carries out the reaction a quinone + NADH + 5 H(+)(in) = a quinol + NAD(+) + 4 H(+)(out). NDH-1 shuttles electrons from NADH, via FMN and iron-sulfur (Fe-S) centers, to quinones in the respiratory chain. The immediate electron acceptor for the enzyme in this species is believed to be ubiquinone. Couples the redox reaction to proton translocation (for every two electrons transferred, four hydrogen ions are translocated across the cytoplasmic membrane), and thus conserves the redox energy in a proton gradient. This Chromobacterium violaceum (strain ATCC 12472 / DSM 30191 / JCM 1249 / CCUG 213 / NBRC 12614 / NCIMB 9131 / NCTC 9757 / MK) protein is NADH-quinone oxidoreductase subunit C.